The following is a 195-amino-acid chain: Guanylate kinase (195 aa).

Residues 12 to 191 enclose the Guanylate kinase-like domain; sequence GLIILISGPS…TIEDIKQLIL (180 aa). 19–26 provides a ligand contact to ATP; the sequence is GPSGVGKG.

Belongs to the guanylate kinase family.

It is found in the cytoplasm. The catalysed reaction is GMP + ATP = GDP + ADP. Its function is as follows. Essential for recycling GMP and indirectly, cGMP. The chain is Guanylate kinase (gmk) from Mycoplasmoides gallisepticum (strain R(low / passage 15 / clone 2)) (Mycoplasma gallisepticum).